The following is a 115-amino-acid chain: UPF0342 protein Bsph_0375 (115 aa).

The protein belongs to the UPF0342 family.

This Lysinibacillus sphaericus (strain C3-41) protein is UPF0342 protein Bsph_0375.